A 390-amino-acid polypeptide reads, in one-letter code: S-adenosylmethionine synthase 1 (390 aa).

Glu9 lines the Mg(2+) pocket. His15 lines the ATP pocket. Glu43 lines the K(+) pocket. L-methionine-binding residues include Glu56 and Gln99. Residues 167-169 (DGK), 235-238 (SGRF), Asp246, 252-253 (RK), Ala269, Lys273, and Lys277 contribute to the ATP site. An L-methionine-binding site is contributed by Asp246. An L-methionine-binding site is contributed by Lys277.

It belongs to the AdoMet synthase family. As to quaternary structure, homotetramer. It depends on Mn(2+) as a cofactor. Requires Mg(2+) as cofactor. The cofactor is Co(2+). K(+) serves as cofactor.

It is found in the cytoplasm. The catalysed reaction is L-methionine + ATP + H2O = S-adenosyl-L-methionine + phosphate + diphosphate. It participates in amino-acid biosynthesis; S-adenosyl-L-methionine biosynthesis; S-adenosyl-L-methionine from L-methionine: step 1/1. Catalyzes the formation of S-adenosylmethionine from methionine and ATP. The reaction comprises two steps that are both catalyzed by the same enzyme: formation of S-adenosylmethionine (AdoMet) and triphosphate, and subsequent hydrolysis of the triphosphate. This chain is S-adenosylmethionine synthase 1 (SAM1), found in Petunia hybrida (Petunia).